A 454-amino-acid chain; its full sequence is uncharacterized protein (454 aa).

Residues 364 to 405 (CSRPGCDAPAYHSEVHHVTPWTTTHRTDINDLTLACGPDNRL) enclose the HNH domain. Residues 415-434 (NAKGDTEWLPPAHLDHGQPR) are disordered.

It belongs to the Rv1128c/1148c/1588c/1702c/1945/3466 family.

This is an uncharacterized protein from Mycobacterium tuberculosis (strain CDC 1551 / Oshkosh).